The primary structure comprises 393 residues: Elongation factor Tu (393 aa).

The region spanning 10 to 203 is the tr-type G domain; sequence KPHVNIGTIG…AVDEFIPEPL (194 aa). The G1 stretch occupies residues 19-26; that stretch reads GHVDHGKT. 19–26 contributes to the GTP binding site; sequence GHVDHGKT. A Mg(2+)-binding site is contributed by threonine 26. A G2 region spans residues 60–64; that stretch reads GITIS. A G3 region spans residues 81 to 84; that stretch reads DCPG. Residues 81 to 85 and 136 to 139 contribute to the GTP site; these read DCPGH and NKVD. Residues 136 to 139 are G4; the sequence is NKVD. A G5 region spans residues 173-175; it reads SAL.

It belongs to the TRAFAC class translation factor GTPase superfamily. Classic translation factor GTPase family. EF-Tu/EF-1A subfamily. As to quaternary structure, monomer.

Its subcellular location is the cytoplasm. It catalyses the reaction GTP + H2O = GDP + phosphate + H(+). In terms of biological role, GTP hydrolase that promotes the GTP-dependent binding of aminoacyl-tRNA to the A-site of ribosomes during protein biosynthesis. The protein is Elongation factor Tu of Chlorobium phaeobacteroides (strain DSM 266 / SMG 266 / 2430).